Consider the following 318-residue polypeptide: MSVSVIIKWGGQEYSINTLSEEDTVLDLKQSIKSLTGVLPERQKLLGLKLKGKPADDNVKLGDLKLKPNTKIMMMGTREESLEDVLAPPPENDDVVNDFDIEEEVTEVENREENLAKIARRVKDYKVEELNPPRPGKRLLVLDIDYTLFDHKSCAETGHELMRPFLHEFLTSAYEDFDIVIWSATSMKWIDAKMKELGVTDNPNYKITFMLDSAAMITVHTPKRGVVEVKPLGVIWGKYSEFYNRKNTIMFDDIGRNFLMNPQNGLKIRPFMKAHLNREKDKELYKLSQYLKEIAKLDDFSGLNHKHWERYLSKKQNQ.

The region spanning 3 to 81 (VSVIIKWGGQ…IMMMGTREES (79 aa)) is the Ubiquitin-like domain. The FCP1 homology domain occupies 133–294 (PRPGKRLLVL…YKLSQYLKEI (162 aa)). 3 residues coordinate Mg(2+): D143, D145, and D253.

It depends on Mg(2+) as a cofactor.

The protein resides in the nucleus. The catalysed reaction is O-phospho-L-seryl-[protein] + H2O = L-seryl-[protein] + phosphate. It catalyses the reaction O-phospho-L-threonyl-[protein] + H2O = L-threonyl-[protein] + phosphate. Its function is as follows. Dephosphorylates 26S nuclear proteasomes, thereby decreasing their proteolytic activity. Recruited to the 19S regulatory particle of the 26S proteasome where it dephosphorylates 19S component psmc2 which impairs psmc2 ATPase activity and disrupts 26S proteasome assembly. Has also been reported to stimulate the proteolytic activity of the 26S proteasome. This is Ubiquitin-like domain-containing CTD phosphatase 1 (ublcp1) from Danio rerio (Zebrafish).